Consider the following 345-residue polypeptide: Dihydroorotase (345 aa).

2 residues coordinate Zn(2+): His13 and His15. Substrate-binding positions include 15 to 17 (HLR) and Asn41. Residues Lys99, His136, and His174 each contribute to the Zn(2+) site. Lys99 is modified (N6-carboxylysine). His136 is a substrate binding site. Leu219 is a substrate binding site. Asp247 lines the Zn(2+) pocket. Residue Asp247 is part of the active site. Substrate-binding residues include His251 and Ala263.

This sequence belongs to the metallo-dependent hydrolases superfamily. DHOase family. Class II DHOase subfamily. Homodimer. Zn(2+) is required as a cofactor.

The enzyme catalyses (S)-dihydroorotate + H2O = N-carbamoyl-L-aspartate + H(+). The protein operates within pyrimidine metabolism; UMP biosynthesis via de novo pathway; (S)-dihydroorotate from bicarbonate: step 3/3. Its function is as follows. Catalyzes the reversible cyclization of carbamoyl aspartate to dihydroorotate. This is Dihydroorotase from Acaryochloris marina (strain MBIC 11017).